The chain runs to 150 residues: Aspartate 1-decarboxylase (150 aa).

Ser-24 functions as the Schiff-base intermediate with substrate; via pyruvic acid in the catalytic mechanism. Ser-24 carries the post-translational modification Pyruvic acid (Ser). A substrate-binding site is contributed by Thr-56. The active-site Proton donor is Tyr-57. A substrate-binding site is contributed by 72 to 74 (GAA).

The protein belongs to the PanD family. As to quaternary structure, heterooctamer of four alpha and four beta subunits. Pyruvate is required as a cofactor. In terms of processing, is synthesized initially as an inactive proenzyme, which is activated by self-cleavage at a specific serine bond to produce a beta-subunit with a hydroxyl group at its C-terminus and an alpha-subunit with a pyruvoyl group at its N-terminus.

It localises to the cytoplasm. The enzyme catalyses L-aspartate + H(+) = beta-alanine + CO2. The protein operates within cofactor biosynthesis; (R)-pantothenate biosynthesis; beta-alanine from L-aspartate: step 1/1. In terms of biological role, catalyzes the pyruvoyl-dependent decarboxylation of aspartate to produce beta-alanine. This chain is Aspartate 1-decarboxylase, found in Beijerinckia indica subsp. indica (strain ATCC 9039 / DSM 1715 / NCIMB 8712).